Reading from the N-terminus, the 364-residue chain is Aminomethyltransferase (364 aa).

It belongs to the GcvT family. The glycine cleavage system is composed of four proteins: P, T, L and H.

It catalyses the reaction N(6)-[(R)-S(8)-aminomethyldihydrolipoyl]-L-lysyl-[protein] + (6S)-5,6,7,8-tetrahydrofolate = N(6)-[(R)-dihydrolipoyl]-L-lysyl-[protein] + (6R)-5,10-methylene-5,6,7,8-tetrahydrofolate + NH4(+). The glycine cleavage system catalyzes the degradation of glycine. In Shewanella denitrificans (strain OS217 / ATCC BAA-1090 / DSM 15013), this protein is Aminomethyltransferase.